Reading from the N-terminus, the 340-residue chain is MKTKIFNTFSISVKAKKIISVYSEIELLQSWQKASAKDPVLFLGSGSNTLFLENYQGTIILNRIKGFHVKENNFFWNIHVCSGELWHNIVTICVNKGISGLENLSWIPGYTGAAPIQNIGAYGVEFKQVCSYVDFIFLETGEKVRLSSQECNFGYRKSIFNSSKKFFNYAIVAIGLKLKKKWKACLNYTDLSFLEKEYVSPKKIYNKIFYIRKEKIPNPVYFGNAGSFFKNPLISSKQAKKILKNYPKAPCFKQLNGNVKFSAGWIIEACGLKGYKLGKAAVYHKQASIIINTGSATGYEIAYLAKYIFCIVKKNFSIQLEPEVKFISKIGEIKASKIIS.

The 171-residue stretch at 11 to 181 folds into the FAD-binding PCMH-type domain; that stretch reads ISVKAKKIIS…VAIGLKLKKK (171 aa). The active site involves Arg156. The active-site Proton donor is the Ser227. The active site involves Glu323.

It belongs to the MurB family. It depends on FAD as a cofactor.

It localises to the cytoplasm. The catalysed reaction is UDP-N-acetyl-alpha-D-muramate + NADP(+) = UDP-N-acetyl-3-O-(1-carboxyvinyl)-alpha-D-glucosamine + NADPH + H(+). Its pathway is cell wall biogenesis; peptidoglycan biosynthesis. Its function is as follows. Cell wall formation. The protein is UDP-N-acetylenolpyruvoylglucosamine reductase of Wigglesworthia glossinidia brevipalpis.